The sequence spans 117 residues: Minor capsid protein p17 (117 aa).

N-linked (GlcNAc...) asparagine; by host glycosylation occurs at Asn-12. A helical transmembrane segment spans residues 39–59 (AIILGILILLVIILIVVAIVY). Asn-61 and Asn-98 each carry an N-linked (GlcNAc...) asparagine; by host glycan. The tract at residues 97–117 (KNSTTQQHIPSDEQLAELAHS) is disordered.

Belongs to the asfivirus minor capsid protein p17 family. In terms of assembly, interacts with the minor capsid protein M1249L and with the hexon capsid protein p72 capsomers; these interactions form a rigid zipper structure that stabilizes the capsomers. Interacts with host STING1.

The protein localises to the virion membrane. It is found in the host endoplasmic reticulum membrane. In terms of biological role, together with the penton and the other minor capsid proteins (M1249L, p49), forms a complicated network immediately below the outer capsid shell, stabilizing the whole capsid. Three copies of p17 encircle each p72 capsomer in the inner capsid shell, anchoring p72 capsomers on the inner membrane. Required for the assembly of the capsid and icosahedral morphogenesis. Additionally, inhibits the host cGAS-STING pathway through its interaction with STING1 and subsequent interference of the recruitment of downstream components TBK1 and IKBKE. This is Minor capsid protein p17 from Ornithodoros (relapsing fever ticks).